The following is a 228-amino-acid chain: Ribonuclease 3 (228 aa).

An RNase III domain is found at 3-132 (IRPLEEHLGI…FLGALYLDQG (130 aa)). Glu45 lines the Mg(2+) pocket. Asp49 is a catalytic residue. Mg(2+) contacts are provided by Asp118 and Glu121. Glu121 is a catalytic residue. The region spanning 158 to 227 (DYKSQLQEFV…AKNALDSINN (70 aa)) is the DRBM domain. A disordered region spans residues 205–228 (GTGRTKKEAEQRAAKNALDSINNS).

This sequence belongs to the ribonuclease III family. In terms of assembly, homodimer. Mg(2+) is required as a cofactor.

The protein localises to the cytoplasm. The enzyme catalyses Endonucleolytic cleavage to 5'-phosphomonoester.. In terms of biological role, digests double-stranded RNA. Involved in the processing of primary rRNA transcript to yield the immediate precursors to the large and small rRNAs (23S and 16S). Processes some mRNAs, and tRNAs when they are encoded in the rRNA operon. Processes pre-crRNA and tracrRNA of type II CRISPR loci if present in the organism. The chain is Ribonuclease 3 from Oceanobacillus iheyensis (strain DSM 14371 / CIP 107618 / JCM 11309 / KCTC 3954 / HTE831).